A 337-amino-acid chain; its full sequence is Phosphate acyltransferase (337 aa).

It belongs to the PlsX family. As to quaternary structure, homodimer. Probably interacts with PlsY.

The protein localises to the cytoplasm. The catalysed reaction is a fatty acyl-[ACP] + phosphate = an acyl phosphate + holo-[ACP]. The protein operates within lipid metabolism; phospholipid metabolism. Functionally, catalyzes the reversible formation of acyl-phosphate (acyl-PO(4)) from acyl-[acyl-carrier-protein] (acyl-ACP). This enzyme utilizes acyl-ACP as fatty acyl donor, but not acyl-CoA. The chain is Phosphate acyltransferase from Ehrlichia chaffeensis (strain ATCC CRL-10679 / Arkansas).